Consider the following 202-residue polypeptide: Pyrrolidone-carboxylate peptidase (202 aa).

Residues glutamate 78, cysteine 141, and histidine 165 contribute to the active site.

Belongs to the peptidase C15 family. Homotetramer.

It is found in the cytoplasm. The catalysed reaction is Release of an N-terminal pyroglutamyl group from a polypeptide, the second amino acid generally not being Pro.. Removes 5-oxoproline from various penultimate amino acid residues except L-proline. The polypeptide is Pyrrolidone-carboxylate peptidase (Thermosipho melanesiensis (strain DSM 12029 / CIP 104789 / BI429)).